A 153-amino-acid chain; its full sequence is Aspartate carbamoyltransferase regulatory chain (153 aa).

Cys109, Cys114, Cys138, and Cys141 together coordinate Zn(2+).

The protein belongs to the PyrI family. As to quaternary structure, contains catalytic and regulatory chains. Requires Zn(2+) as cofactor.

Its function is as follows. Involved in allosteric regulation of aspartate carbamoyltransferase. The polypeptide is Aspartate carbamoyltransferase regulatory chain (Wigglesworthia glossinidia brevipalpis).